A 417-amino-acid polypeptide reads, in one-letter code: NADP-specific glutamate dehydrogenase A1 (417 aa).

Lysine 105 is an active-site residue.

The protein belongs to the Glu/Leu/Phe/Val dehydrogenases family. Homohexamer.

It carries out the reaction L-glutamate + NADP(+) + H2O = 2-oxoglutarate + NH4(+) + NADPH + H(+). This Halobacterium salinarum (Halobacterium halobium) protein is NADP-specific glutamate dehydrogenase A1 (gdhA1).